We begin with the raw amino-acid sequence, 549 residues long: CDK5RAP3 protein homolog (549 aa).

Short sequence motifs (shuffled ATG8-binding motif) lie at residues 274-277, 285-288, and 333-336; these read IDWD and ISWD.

The protein belongs to the CDK5RAP3 family. In terms of assembly, substrate adapter component of the UFM1 ribosome E3 ligase (UREL) complex. Interacts with ATG8 family proteins.

Functionally, substrate adapter of E3 ligase complexes mediating ufmylation, the covalent attachment of the ubiquitin-like modifier UFM1 to substrate proteins, and which is involved in various processes, such as ribosome recycling and reticulophagy (also called ER-phagy). The chain is CDK5RAP3 protein homolog from Arabidopsis thaliana (Mouse-ear cress).